Reading from the N-terminus, the 205-residue chain is Glycerol-3-phosphate acyltransferase (205 aa).

5 helical membrane passes run 4-24 (IAPG…AILV), 80-100 (PFWL…PVFF), 107-127 (GVAT…GVMA), 130-150 (WLLT…SALI), and 155-175 (VWWF…LILL).

This sequence belongs to the PlsY family. In terms of assembly, probably interacts with PlsX.

Its subcellular location is the cell inner membrane. The enzyme catalyses an acyl phosphate + sn-glycerol 3-phosphate = a 1-acyl-sn-glycero-3-phosphate + phosphate. It participates in lipid metabolism; phospholipid metabolism. Catalyzes the transfer of an acyl group from acyl-phosphate (acyl-PO(4)) to glycerol-3-phosphate (G3P) to form lysophosphatidic acid (LPA). This enzyme utilizes acyl-phosphate as fatty acyl donor, but not acyl-CoA or acyl-ACP. The chain is Glycerol-3-phosphate acyltransferase from Klebsiella pneumoniae subsp. pneumoniae (strain ATCC 700721 / MGH 78578).